Consider the following 179-residue polypeptide: ADP-ribosylation factor-like protein 5A (179 aa).

Residue Gly-2 is the site of N-myristoyl glycine attachment. GTP-binding positions include Gly-23–Thr-30, Asp-66–Gln-70, Asn-125–Asp-128, and Ala-159.

The protein belongs to the small GTPase superfamily. Arf family.

Functionally, lacks ADP-ribosylation enhancing activity. The protein is ADP-ribosylation factor-like protein 5A (ARL5A) of Homo sapiens (Human).